The chain runs to 120 residues: uncharacterized protein (120 aa).

This is an uncharacterized protein from Methanocaldococcus jannaschii (strain ATCC 43067 / DSM 2661 / JAL-1 / JCM 10045 / NBRC 100440) (Methanococcus jannaschii).